The sequence spans 447 residues: Probable glycine dehydrogenase (decarboxylating) subunit 1 (447 aa).

Belongs to the GcvP family. N-terminal subunit subfamily. In terms of assembly, the glycine cleavage system is composed of four proteins: P, T, L and H. In this organism, the P 'protein' is a heterodimer of two subunits.

It catalyses the reaction N(6)-[(R)-lipoyl]-L-lysyl-[glycine-cleavage complex H protein] + glycine + H(+) = N(6)-[(R)-S(8)-aminomethyldihydrolipoyl]-L-lysyl-[glycine-cleavage complex H protein] + CO2. In terms of biological role, the glycine cleavage system catalyzes the degradation of glycine. The P protein binds the alpha-amino group of glycine through its pyridoxal phosphate cofactor; CO(2) is released and the remaining methylamine moiety is then transferred to the lipoamide cofactor of the H protein. This is Probable glycine dehydrogenase (decarboxylating) subunit 1 from Bacillus cereus (strain ATCC 10987 / NRS 248).